An 880-amino-acid chain; its full sequence is Alanine--tRNA ligase (880 aa).

4 residues coordinate Zn(2+): histidine 567, histidine 571, cysteine 669, and histidine 673.

The protein belongs to the class-II aminoacyl-tRNA synthetase family. The cofactor is Zn(2+).

The protein localises to the cytoplasm. It carries out the reaction tRNA(Ala) + L-alanine + ATP = L-alanyl-tRNA(Ala) + AMP + diphosphate. Functionally, catalyzes the attachment of alanine to tRNA(Ala) in a two-step reaction: alanine is first activated by ATP to form Ala-AMP and then transferred to the acceptor end of tRNA(Ala). Also edits incorrectly charged Ser-tRNA(Ala) and Gly-tRNA(Ala) via its editing domain. The sequence is that of Alanine--tRNA ligase from Bacillus anthracis.